A 117-amino-acid chain; its full sequence is Non-specific lipid-transfer protein 3 (117 aa).

An N-terminal signal peptide occupies residues 1–25; that stretch reads MAGLVKLSCLVLACMIVAGPIATNA. 4 cysteine pairs are disulfide-bonded: cysteine 29–cysteine 76, cysteine 39–cysteine 53, cysteine 54–cysteine 99, and cysteine 74–cysteine 113.

This sequence belongs to the plant LTP family.

Functionally, plant non-specific lipid-transfer proteins transfer phospholipids as well as galactolipids across membranes. May play a role in wax or cutin deposition in the cell walls of expanding epidermal cells and certain secretory tissues. This is Non-specific lipid-transfer protein 3 (LTP3) from Brassica napus (Rape).